Reading from the N-terminus, the 152-residue chain is Deoxyuridine 5'-triphosphate nucleotidohydrolase (152 aa).

Substrate contacts are provided by residues 70–72 (RSG), Asn-83, 87–89 (LID), and Met-97.

This sequence belongs to the dUTPase family. Mg(2+) is required as a cofactor.

It carries out the reaction dUTP + H2O = dUMP + diphosphate + H(+). Its pathway is pyrimidine metabolism; dUMP biosynthesis; dUMP from dCTP (dUTP route): step 2/2. This enzyme is involved in nucleotide metabolism: it produces dUMP, the immediate precursor of thymidine nucleotides and it decreases the intracellular concentration of dUTP so that uracil cannot be incorporated into DNA. This Buchnera aphidicola subsp. Baizongia pistaciae (strain Bp) protein is Deoxyuridine 5'-triphosphate nucleotidohydrolase.